The sequence spans 544 residues: Protein angel homolog 2 (544 aa).

This sequence belongs to the CCR4/nocturin family.

This is Protein angel homolog 2 (ANGEL2) from Bos taurus (Bovine).